The sequence spans 225 residues: Dynein axonemal assembly factor 19 (225 aa).

Residues 8-32 (DFRELERELANALAADQKYSRENDA) adopt a coiled-coil conformation.

It belongs to the DNAAF19/PR46b family. Homodimer.

It is found in the cytoplasm. The protein resides in the cell projection. It localises to the cilium. Its subcellular location is the flagellum. In terms of biological role, dynein-attachment factor required for cilia motility. The polypeptide is Dynein axonemal assembly factor 19 (dnaaf19) (Xenopus tropicalis (Western clawed frog)).